Here is a 599-residue protein sequence, read N- to C-terminus: MNHIRNFSIIAHIDHGKSTLSDRIIQICGGLSEREMAAQVLDSMDLERERGITIKAQSVTLDYHSKDGQTYQLNFIDTPGHVDFSYEVSRSLAACEGALLVVDAGQGVEAQTLANCYTAMEMDLEVVPVLNKIDLPAADPERVAEEIEDIVGIDATDAIRCSAKTGVGVPDVLERLVRDIPAPEGDPNGPLQALIIDSWFDNYLGVVSLIRIKNGSLRKGDKVKVMSTGQSYNADRLGIFTPKRVDRDVLNCGEVGWLVCAIKDILGAPVGDTLTLTRNPAEKSLPGFKKVKPQVYAGLFPISSDDYESFRDALGKLSLNDASLFYEPESSTALGFGFRCGFLGLLHMEIIQERLEREYDLELITTAPTVVYEVITTNQETVYVDSPSKLPALNNIEELREPIAECHMLLPQEYLGNVITLCIEKRGTQTNMVYHGKQVALTYEIPMAEVVLDFFDRLKSTSRGYASLDYNFKRFQTSDMVRVDVLINNERVDALALITHRDNAQYRGRDLVEKMKELIPRQQFDIAIQAAIGNHIIARSTVKQLRKNVLAKCYGGDVSRKKKLLQKQKDGKKRMKQVGNVELPQEAFLAILHVGKDSK.

The 183-residue stretch at 2 to 184 (NHIRNFSIIA…RLVRDIPAPE (183 aa)) folds into the tr-type G domain. GTP contacts are provided by residues 14–19 (DHGKST) and 131–134 (NKID).

Belongs to the TRAFAC class translation factor GTPase superfamily. Classic translation factor GTPase family. LepA subfamily.

The protein localises to the cell inner membrane. It catalyses the reaction GTP + H2O = GDP + phosphate + H(+). Its function is as follows. Required for accurate and efficient protein synthesis under certain stress conditions. May act as a fidelity factor of the translation reaction, by catalyzing a one-codon backward translocation of tRNAs on improperly translocated ribosomes. Back-translocation proceeds from a post-translocation (POST) complex to a pre-translocation (PRE) complex, thus giving elongation factor G a second chance to translocate the tRNAs correctly. Binds to ribosomes in a GTP-dependent manner. The polypeptide is Elongation factor 4 (Yersinia pestis (strain Pestoides F)).